We begin with the raw amino-acid sequence, 331 residues long: Phosphoribosylformylglycinamidine cyclo-ligase (331 aa).

Belongs to the AIR synthase family.

Its subcellular location is the cytoplasm. It catalyses the reaction 2-formamido-N(1)-(5-O-phospho-beta-D-ribosyl)acetamidine + ATP = 5-amino-1-(5-phospho-beta-D-ribosyl)imidazole + ADP + phosphate + H(+). It functions in the pathway purine metabolism; IMP biosynthesis via de novo pathway; 5-amino-1-(5-phospho-D-ribosyl)imidazole from N(2)-formyl-N(1)-(5-phospho-D-ribosyl)glycinamide: step 2/2. This is Phosphoribosylformylglycinamidine cyclo-ligase from Clostridium botulinum (strain ATCC 19397 / Type A).